The sequence spans 446 residues: Adenylosuccinate synthetase (446 aa).

GTP is bound by residues 21-27 and 49-51; these read GDEGKGK and GHT. The active-site Proton acceptor is aspartate 22. 2 residues coordinate Mg(2+): aspartate 22 and glycine 49. IMP contacts are provided by residues 22-25, 47-50, threonine 141, arginine 155, glutamine 236, threonine 251, and arginine 319; these read DEGK and NAGH. The active-site Proton donor is the histidine 50. 315-321 is a binding site for substrate; sequence VTTGRSR. Residues arginine 321, 347-349, and 429-431 each bind GTP; these read KLD and STS.

It belongs to the adenylosuccinate synthetase family. As to quaternary structure, homodimer. It depends on Mg(2+) as a cofactor.

It localises to the cytoplasm. The enzyme catalyses IMP + L-aspartate + GTP = N(6)-(1,2-dicarboxyethyl)-AMP + GDP + phosphate + 2 H(+). It functions in the pathway purine metabolism; AMP biosynthesis via de novo pathway; AMP from IMP: step 1/2. In terms of biological role, plays an important role in the de novo pathway of purine nucleotide biosynthesis. Catalyzes the first committed step in the biosynthesis of AMP from IMP. The chain is Adenylosuccinate synthetase from Polaromonas sp. (strain JS666 / ATCC BAA-500).